Reading from the N-terminus, the 113-residue chain is Cysteine proteinase inhibitor 6 (113 aa).

The signal sequence occupies residues 1-18 (MAMTTRTLLLAAVCAAAA). The Secondary area of contact motif lies at 65–69 (QVVSG).

It belongs to the cystatin family. Phytocystatin subfamily.

The protein localises to the secreted. Its function is as follows. Specific inhibitor of cysteine proteinases. Probably involved in the regulation of endogenous processes and in defense against pests and pathogens. This chain is Cysteine proteinase inhibitor 6, found in Oryza sativa subsp. japonica (Rice).